The primary structure comprises 836 residues: Protein translocase subunit SecA (836 aa).

ATP contacts are provided by residues glutamine 85, 103–107 (GEGKT), and aspartate 492. Residues cysteine 820, cysteine 822, cysteine 831, and cysteine 832 each coordinate Zn(2+).

The protein belongs to the SecA family. Monomer and homodimer. Part of the essential Sec protein translocation apparatus which comprises SecA, SecYEG and auxiliary proteins SecDF. Other proteins may also be involved. The cofactor is Zn(2+).

The protein resides in the cell membrane. The protein localises to the cytoplasm. It carries out the reaction ATP + H2O + cellular proteinSide 1 = ADP + phosphate + cellular proteinSide 2.. Its function is as follows. Part of the Sec protein translocase complex. Interacts with the SecYEG preprotein conducting channel. Has a central role in coupling the hydrolysis of ATP to the transfer of proteins into and across the cell membrane, serving as an ATP-driven molecular motor driving the stepwise translocation of polypeptide chains across the membrane. This chain is Protein translocase subunit SecA, found in Clostridium botulinum (strain Alaska E43 / Type E3).